The primary structure comprises 209 residues: Uracil phosphoribosyltransferase (209 aa).

5-phospho-alpha-D-ribose 1-diphosphate is bound by residues arginine 79, arginine 104, and 131 to 139; that span reads DPMLATGGS. Uracil-binding positions include isoleucine 194 and 199-201; that span reads GDA. A 5-phospho-alpha-D-ribose 1-diphosphate-binding site is contributed by aspartate 200.

The protein belongs to the UPRTase family. It depends on Mg(2+) as a cofactor.

The catalysed reaction is UMP + diphosphate = 5-phospho-alpha-D-ribose 1-diphosphate + uracil. It functions in the pathway pyrimidine metabolism; UMP biosynthesis via salvage pathway; UMP from uracil: step 1/1. Its activity is regulated as follows. Allosterically activated by GTP. Catalyzes the conversion of uracil and 5-phospho-alpha-D-ribose 1-diphosphate (PRPP) to UMP and diphosphate. The chain is Uracil phosphoribosyltransferase from Lachnoclostridium phytofermentans (strain ATCC 700394 / DSM 18823 / ISDg) (Clostridium phytofermentans).